Here is a 397-residue protein sequence, read N- to C-terminus: Ribosomal RNA large subunit methyltransferase I (397 aa).

In terms of domain architecture, PUA spans serine 2 to arginine 81.

It belongs to the methyltransferase superfamily. RlmI family.

It is found in the cytoplasm. It catalyses the reaction cytidine(1962) in 23S rRNA + S-adenosyl-L-methionine = 5-methylcytidine(1962) in 23S rRNA + S-adenosyl-L-homocysteine + H(+). Functionally, specifically methylates the cytosine at position 1962 (m5C1962) of 23S rRNA. The sequence is that of Ribosomal RNA large subunit methyltransferase I from Tolumonas auensis (strain DSM 9187 / NBRC 110442 / TA 4).